A 196-amino-acid chain; its full sequence is Holliday junction branch migration complex subunit RuvA (196 aa).

A domain I region spans residues 1–63 (MISFVSGRVA…EDSLTLYGFA (63 aa)). A domain II region spans residues 64–136 (DDDERTVFEL…LKDRLGTPST (73 aa)). The segment at 136–140 (TAAAE) is flexible linker. The tract at residues 141–196 (STSGWRDAVHAGLLNLGYTARQADEAIAAIAGELDDSAAVDTATALRLALATLKRP) is domain III.

It belongs to the RuvA family. Homotetramer. Forms an RuvA(8)-RuvB(12)-Holliday junction (HJ) complex. HJ DNA is sandwiched between 2 RuvA tetramers; dsDNA enters through RuvA and exits via RuvB. An RuvB hexamer assembles on each DNA strand where it exits the tetramer. Each RuvB hexamer is contacted by two RuvA subunits (via domain III) on 2 adjacent RuvB subunits; this complex drives branch migration. In the full resolvosome a probable DNA-RuvA(4)-RuvB(12)-RuvC(2) complex forms which resolves the HJ.

Its subcellular location is the cytoplasm. In terms of biological role, the RuvA-RuvB-RuvC complex processes Holliday junction (HJ) DNA during genetic recombination and DNA repair, while the RuvA-RuvB complex plays an important role in the rescue of blocked DNA replication forks via replication fork reversal (RFR). RuvA specifically binds to HJ cruciform DNA, conferring on it an open structure. The RuvB hexamer acts as an ATP-dependent pump, pulling dsDNA into and through the RuvAB complex. HJ branch migration allows RuvC to scan DNA until it finds its consensus sequence, where it cleaves and resolves the cruciform DNA. The sequence is that of Holliday junction branch migration complex subunit RuvA from Acidothermus cellulolyticus (strain ATCC 43068 / DSM 8971 / 11B).